The sequence spans 236 residues: Outer membrane protein P.III (236 aa).

Residues 1 to 22 (MTKQLKLSALFVALLASGTAVA) form the signal peptide. Tandem repeats lie at residues 69 to 70 (VP), 71 to 72 (EP), 73 to 74 (EP), and 75 to 76 (AP). Residues 69 to 76 (VPEPEPAP) form a 4 X 2 AA tandem repeats of X-P region. Residues 86 to 223 (YVDETISLSA…RVDVKIRSIV (138 aa)) form the OmpA-like domain. The cysteines at positions 185 and 208 are disulfide-linked.

It belongs to the outer membrane OOP (TC 1.B.6) superfamily.

It is found in the cell outer membrane. The protein is Outer membrane protein P.III of Neisseria gonorrhoeae.